The chain runs to 531 residues: Apolipoprotein N-acyltransferase (531 aa).

Helical transmembrane passes span 8-28 (IILLSGASRAFVGFLAGLLAM), 34-54 (FGIFAAAFISFPMLVWLIDGV), 74-94 (WSFGFGYFLGGLWWLGNAFLV), 105-125 (LAVVGLPAVLALFYALAVLVA), 128-148 (LWSDGVGRIAALAVGFGVAEW), 178-198 (VLNVATINMLAVFVFAAPALI), and 206-226 (VGLAVAAALFAAHIGYGYYRL). The CN hydrolase domain occupies 243–493 (VQPVIDQAKK…KGVTDAILPG (251 aa)). Glu-287 (proton acceptor) is an active-site residue. Lys-351 is a catalytic residue. Residue Cys-405 is the Nucleophile of the active site. The helical transmembrane segment at 501–521 (SMLRGRIFWFTGVFLLLVAAI) threads the bilayer.

It belongs to the CN hydrolase family. Apolipoprotein N-acyltransferase subfamily.

It localises to the cell inner membrane. It carries out the reaction N-terminal S-1,2-diacyl-sn-glyceryl-L-cysteinyl-[lipoprotein] + a glycerophospholipid = N-acyl-S-1,2-diacyl-sn-glyceryl-L-cysteinyl-[lipoprotein] + a 2-acyl-sn-glycero-3-phospholipid + H(+). It participates in protein modification; lipoprotein biosynthesis (N-acyl transfer). Its function is as follows. Catalyzes the phospholipid dependent N-acylation of the N-terminal cysteine of apolipoprotein, the last step in lipoprotein maturation. This chain is Apolipoprotein N-acyltransferase, found in Sinorhizobium fredii (strain NBRC 101917 / NGR234).